The sequence spans 420 residues: Glycerol-3-phosphate dehydrogenase [NAD(+)] (420 aa).

NAD(+) contacts are provided by residues 16 to 21 (GSGNWG), F48, and F119. K142 is a binding site for substrate. A175 contributes to the NAD(+) binding site. Positions 190 to 217 (YDPPPMDNSRAPTPRSNSPANGNGIAPL) are disordered. Over residues 199–210 (RAPTPRSNSPAN) the composition is skewed to polar residues. Residue K278 is the Proton acceptor of the active site. R344 and Q373 together coordinate NAD(+). Substrate is bound at residue 344-345 (RN).

Belongs to the NAD-dependent glycerol-3-phosphate dehydrogenase family.

It carries out the reaction sn-glycerol 3-phosphate + NAD(+) = dihydroxyacetone phosphate + NADH + H(+). The sequence is that of Glycerol-3-phosphate dehydrogenase [NAD(+)] from Colletotrichum gloeosporioides (Anthracnose fungus).